Consider the following 375-residue polypeptide: DNA replication and repair protein RecF (375 aa).

ATP is bound at residue glycine 30–threonine 37.

The protein belongs to the RecF family.

It localises to the cytoplasm. The RecF protein is involved in DNA metabolism; it is required for DNA replication and normal SOS inducibility. RecF binds preferentially to single-stranded, linear DNA. It also seems to bind ATP. In Bacillus cereus (strain B4264), this protein is DNA replication and repair protein RecF.